A 419-amino-acid chain; its full sequence is UDP-N-acetylglucosamine 1-carboxyvinyltransferase (419 aa).

22-23 provides a ligand contact to phosphoenolpyruvate; sequence KN. Residue R95 coordinates UDP-N-acetyl-alpha-D-glucosamine. C119 (proton donor) is an active-site residue. The residue at position 119 (C119) is a 2-(S-cysteinyl)pyruvic acid O-phosphothioketal. UDP-N-acetyl-alpha-D-glucosamine contacts are provided by residues 164 to 167, D308, and I330; that span reads KVSV.

Belongs to the EPSP synthase family. MurA subfamily.

The protein localises to the cytoplasm. It carries out the reaction phosphoenolpyruvate + UDP-N-acetyl-alpha-D-glucosamine = UDP-N-acetyl-3-O-(1-carboxyvinyl)-alpha-D-glucosamine + phosphate. Its pathway is cell wall biogenesis; peptidoglycan biosynthesis. Cell wall formation. Adds enolpyruvyl to UDP-N-acetylglucosamine. This chain is UDP-N-acetylglucosamine 1-carboxyvinyltransferase, found in Rickettsia rickettsii (strain Iowa).